Here is a 264-residue protein sequence, read N- to C-terminus: Glutamate racemase (264 aa).

Substrate contacts are provided by residues 9–10 (DS) and 41–42 (YG). The Proton donor/acceptor role is filled by Cys72. 73 to 74 (NT) provides a ligand contact to substrate. Residue Cys183 is the Proton donor/acceptor of the active site. Substrate is bound at residue 184 to 185 (TH).

This sequence belongs to the aspartate/glutamate racemases family.

It catalyses the reaction L-glutamate = D-glutamate. It functions in the pathway cell wall biogenesis; peptidoglycan biosynthesis. In terms of biological role, provides the (R)-glutamate required for cell wall biosynthesis. This chain is Glutamate racemase, found in Geobacillus sp. (strain WCH70).